Here is a 251-residue protein sequence, read N- to C-terminus: Mast cell protease 3 (251 aa).

Residues 1–17 (MVLFLLLVALLSPAGEA) form the signal peptide. Residues 18 to 19 (GK) constitute a propeptide, activation peptide. One can recognise a Peptidase S1 domain in the interval 20–243 (IIGGHEAKPH…FLSWIQRTMR (224 aa)). Cys-48 and Cys-64 are joined by a disulfide. Catalysis depends on His-63, which acts as the Charge relay system. The N-linked (GlcNAc...) asparagine glycan is linked to Asn-70. Residue Asp-107 is the Charge relay system of the active site. Disulfide bonds link Cys-141–Cys-207 and Cys-172–Cys-186. Residue Ser-201 is the Charge relay system of the active site.

The protein belongs to the peptidase S1 family. Granzyme subfamily.

The protein localises to the secreted. The protein resides in the cytoplasmic granule. The polypeptide is Mast cell protease 3 (Ovis aries (Sheep)).